The sequence spans 452 residues: Exodeoxyribonuclease 7 large subunit (452 aa).

The protein belongs to the XseA family. Heterooligomer composed of large and small subunits.

It localises to the cytoplasm. It carries out the reaction Exonucleolytic cleavage in either 5'- to 3'- or 3'- to 5'-direction to yield nucleoside 5'-phosphates.. Bidirectionally degrades single-stranded DNA into large acid-insoluble oligonucleotides, which are then degraded further into small acid-soluble oligonucleotides. The chain is Exodeoxyribonuclease 7 large subunit from Bacillus thuringiensis (strain Al Hakam).